The following is a 199-amino-acid chain: N-(5'-phosphoribosyl)anthranilate isomerase (199 aa).

The protein belongs to the TrpF family.

The catalysed reaction is N-(5-phospho-beta-D-ribosyl)anthranilate = 1-(2-carboxyphenylamino)-1-deoxy-D-ribulose 5-phosphate. It functions in the pathway amino-acid biosynthesis; L-tryptophan biosynthesis; L-tryptophan from chorismate: step 3/5. In Lacticaseibacillus casei (strain BL23) (Lactobacillus casei), this protein is N-(5'-phosphoribosyl)anthranilate isomerase.